We begin with the raw amino-acid sequence, 288 residues long: Small ribosomal subunit protein uS9m (288 aa).

Residues 269 to 288 (VERKKPGKKKARKMPTWVKR) are disordered.

Belongs to the universal ribosomal protein uS9 family.

The protein localises to the mitochondrion. This chain is Small ribosomal subunit protein uS9m (MRPS9), found in Candida glabrata (strain ATCC 2001 / BCRC 20586 / JCM 3761 / NBRC 0622 / NRRL Y-65 / CBS 138) (Yeast).